A 313-amino-acid chain; its full sequence is Ribosomal protein L11 methyltransferase (313 aa).

S-adenosyl-L-methionine contacts are provided by Thr163, Gly184, Asp206, and Asn249.

The protein belongs to the methyltransferase superfamily. PrmA family.

It localises to the cytoplasm. The catalysed reaction is L-lysyl-[protein] + 3 S-adenosyl-L-methionine = N(6),N(6),N(6)-trimethyl-L-lysyl-[protein] + 3 S-adenosyl-L-homocysteine + 3 H(+). In terms of biological role, methylates ribosomal protein L11. The chain is Ribosomal protein L11 methyltransferase from Brevibacillus brevis (strain 47 / JCM 6285 / NBRC 100599).